Consider the following 336-residue polypeptide: Holliday junction branch migration complex subunit RuvB (336 aa).

The segment at 1 to 182 is large ATPase domain (RuvB-L); that stretch reads MKERIVNLET…FGMSFRMQFY (182 aa). ATP is bound by residues leucine 21, arginine 22, glycine 63, lysine 66, threonine 67, serine 68, 129–131, arginine 172, tyrosine 182, and arginine 219; that span reads EDF. Residue threonine 67 participates in Mg(2+) binding. The small ATPAse domain (RuvB-S) stretch occupies residues 183-253; it reads NPSELALIIK…ITLHALNELG (71 aa). The interval 256-336 is head domain (RuvB-H); it reads ELGFDEADLA…IPTLNPQTLF (81 aa). Residues arginine 310 and arginine 315 each contribute to the DNA site.

It belongs to the RuvB family. As to quaternary structure, homohexamer. Forms an RuvA(8)-RuvB(12)-Holliday junction (HJ) complex. HJ DNA is sandwiched between 2 RuvA tetramers; dsDNA enters through RuvA and exits via RuvB. An RuvB hexamer assembles on each DNA strand where it exits the tetramer. Each RuvB hexamer is contacted by two RuvA subunits (via domain III) on 2 adjacent RuvB subunits; this complex drives branch migration. In the full resolvosome a probable DNA-RuvA(4)-RuvB(12)-RuvC(2) complex forms which resolves the HJ.

The protein resides in the cytoplasm. The enzyme catalyses ATP + H2O = ADP + phosphate + H(+). Its function is as follows. The RuvA-RuvB-RuvC complex processes Holliday junction (HJ) DNA during genetic recombination and DNA repair, while the RuvA-RuvB complex plays an important role in the rescue of blocked DNA replication forks via replication fork reversal (RFR). RuvA specifically binds to HJ cruciform DNA, conferring on it an open structure. The RuvB hexamer acts as an ATP-dependent pump, pulling dsDNA into and through the RuvAB complex. RuvB forms 2 homohexamers on either side of HJ DNA bound by 1 or 2 RuvA tetramers; 4 subunits per hexamer contact DNA at a time. Coordinated motions by a converter formed by DNA-disengaged RuvB subunits stimulates ATP hydrolysis and nucleotide exchange. Immobilization of the converter enables RuvB to convert the ATP-contained energy into a lever motion, pulling 2 nucleotides of DNA out of the RuvA tetramer per ATP hydrolyzed, thus driving DNA branch migration. The RuvB motors rotate together with the DNA substrate, which together with the progressing nucleotide cycle form the mechanistic basis for DNA recombination by continuous HJ branch migration. Branch migration allows RuvC to scan DNA until it finds its consensus sequence, where it cleaves and resolves cruciform DNA. In Helicobacter pylori (strain ATCC 700392 / 26695) (Campylobacter pylori), this protein is Holliday junction branch migration complex subunit RuvB.